We begin with the raw amino-acid sequence, 133 residues long: Large ribosomal subunit protein uL15 (133 aa).

The tract at residues 1-62 (MALHNLQPAP…GQQPLQRRLP (62 aa)) is disordered. Residues 32 to 45 (TRGQKGQKSRTGYS) are compositionally biased toward polar residues.

Belongs to the universal ribosomal protein uL15 family. As to quaternary structure, part of the 50S ribosomal subunit.

Binds to the 23S rRNA. The sequence is that of Large ribosomal subunit protein uL15 from Nitratiruptor sp. (strain SB155-2).